We begin with the raw amino-acid sequence, 218 residues long: Ribose-5-phosphate isomerase A (218 aa).

Residues 28–31, 81–84, and 94–97 contribute to the substrate site; these read TGST, DGAD, and KGGG. E103 (proton acceptor) is an active-site residue. K121 serves as a coordination point for substrate.

Belongs to the ribose 5-phosphate isomerase family. In terms of assembly, homodimer.

It carries out the reaction aldehydo-D-ribose 5-phosphate = D-ribulose 5-phosphate. The protein operates within carbohydrate degradation; pentose phosphate pathway; D-ribose 5-phosphate from D-ribulose 5-phosphate (non-oxidative stage): step 1/1. Catalyzes the reversible conversion of ribose-5-phosphate to ribulose 5-phosphate. The polypeptide is Ribose-5-phosphate isomerase A (Vibrio vulnificus (strain CMCP6)).